The sequence spans 144 residues: Large ribosomal subunit protein uL13 (144 aa).

This sequence belongs to the universal ribosomal protein uL13 family. Part of the 50S ribosomal subunit.

Its function is as follows. This protein is one of the early assembly proteins of the 50S ribosomal subunit, although it is not seen to bind rRNA by itself. It is important during the early stages of 50S assembly. The protein is Large ribosomal subunit protein uL13 of Clostridium botulinum (strain ATCC 19397 / Type A).